The chain runs to 386 residues: Patatin-B1 (386 aa).

The first 23 residues, 1–23 (MATTKSFLILFFMILATTSSTCA), serve as a signal peptide directing secretion. Residues 32-229 (LSIDGGGIKG…TVGDPALLSL (198 aa)) form the PNPLA domain. The GXGXXG motif lies at 36-41 (GGGIKG). The short motif at 75-79 (GTSTG) is the GXSXG element. Residue Ser-77 is the Nucleophile of the active site. An N-linked (GlcNAc...) asparagine glycan is attached at Asn-115. Asp-215 functions as the Proton acceptor in the catalytic mechanism. Residues 215-217 (DGG) carry the DGA/G motif.

It belongs to the patatin family.

Its subcellular location is the vacuole. Probable lipolytic acyl hydrolase (LAH), an activity which is thought to be involved in the response of tubers to pathogens. The chain is Patatin-B1 (PATB1) from Solanum tuberosum (Potato).